We begin with the raw amino-acid sequence, 340 residues long: Protein RecA (340 aa).

ATP is bound at residue 67 to 74 (GNESSGKT).

Belongs to the RecA family.

It localises to the cytoplasm. In terms of biological role, can catalyze the hydrolysis of ATP in the presence of single-stranded DNA, the ATP-dependent uptake of single-stranded DNA by duplex DNA, and the ATP-dependent hybridization of homologous single-stranded DNAs. It interacts with LexA causing its activation and leading to its autocatalytic cleavage. The protein is Protein RecA of Mycoplasma genitalium (strain ATCC 33530 / DSM 19775 / NCTC 10195 / G37) (Mycoplasmoides genitalium).